The primary structure comprises 297 residues: uncharacterized protein (297 aa).

6 helical membrane-spanning segments follow: residues 26–48, 80–102, 134–156, 185–205, 225–247, and 262–284; these read FVLH…IYAI, NIEL…AALF, LFKF…INLG, LGIF…AIVI, LVDT…VAAY, and LVAV…VELY.

The protein localises to the cell membrane. This is an uncharacterized protein from Archaeoglobus fulgidus (strain ATCC 49558 / DSM 4304 / JCM 9628 / NBRC 100126 / VC-16).